The sequence spans 340 residues: Pilin (340 aa).

The first 23 residues, 1 to 23 (MKLRHLLLTGAALTSFAATTVHG), serve as a signal peptide directing secretion. Cross-links (isoaspartyl lysine isopeptide (Lys-Asn)) lie at residues 36–168 (KNLD…QFKN) and 179–303 (KKVS…TFTN). Lys161 participates in a covalent cross-link: Threonyl lysine isopeptide (Lys-Thr) (interchain with T-311). The EVPTG sorting signal signature appears at 308–312 (EVPTG). The residue at position 311 (Thr311) is a Pentaglycyl murein peptidoglycan amidated threonine; alternate. Thr311 participates in a covalent cross-link: Threonyl lysine isopeptide (Thr-Lys) (interchain with K-161); alternate. The propeptide at 312–340 (GVAMTVAPYIALGIVAVGGALYFVKKKNA) is removed by sortase C1.

Belongs to the Streptococcus pilin family. Forms columns of about 3-nanometers in diameter of head-to-tail-assembled molecules. Proteolytically processed and assembled in pili through a transpeptidation reaction catalyzed by the sortase C1. The last pilin subunit is cross-linked to the peptidoglycan.

It is found in the secreted. It localises to the cell wall. The protein resides in the fimbrium. Major component of the pilus. A stack of the pilin subunits, joined by intermolecular isopeptide bonds, forms the pilus. The pilus is required for bacterial adhesion to host cells, for bacterial aggregation, and for biofilm formation. In Streptococcus pyogenes serotype M1, this protein is Pilin.